A 161-amino-acid polypeptide reads, in one-letter code: Putative 4-hydroxy-4-methyl-2-oxoglutarate aldolase (161 aa).

Substrate contacts are provided by residues Gly75–Leu78 and Arg97. Asp98 is a binding site for a divalent metal cation.

It belongs to the class II aldolase/RraA-like family. In terms of assembly, homotrimer. A divalent metal cation serves as cofactor.

The enzyme catalyses 4-hydroxy-4-methyl-2-oxoglutarate = 2 pyruvate. It carries out the reaction oxaloacetate + H(+) = pyruvate + CO2. Its function is as follows. Catalyzes the aldol cleavage of 4-hydroxy-4-methyl-2-oxoglutarate (HMG) into 2 molecules of pyruvate. Also contains a secondary oxaloacetate (OAA) decarboxylase activity due to the common pyruvate enolate transition state formed following C-C bond cleavage in the retro-aldol and decarboxylation reactions. This chain is Putative 4-hydroxy-4-methyl-2-oxoglutarate aldolase, found in Vibrio cholerae serotype O1 (strain ATCC 39315 / El Tor Inaba N16961).